Reading from the N-terminus, the 397-residue chain is Subtilisin-like protease 12 (397 aa).

A signal peptide spans 1–19 (MSIFKLMVIYFTLFWVVNA). Residues 20–116 (AQLLDLDSHG…VEPNREMKAA (97 aa)) constitute a propeptide that is removed on maturation. The region spanning 35-115 (YIVVMKNGVS…FVEPNREMKA (81 aa)) is the Inhibitor I9 domain. 3 N-linked (GlcNAc...) asparagine glycosylation sites follow: Asn-123, Asn-136, and Asn-150. Residues 125–397 (TWGLARISHM…DKLLYNGSGA (273 aa)) enclose the Peptidase S8 domain. Catalysis depends on charge relay system residues Asp-157 and His-188. Residues Asn-249, Asn-305, and Asn-334 are each glycosylated (N-linked (GlcNAc...) asparagine). The active-site Charge relay system is Ser-343. Asn-385 and Asn-393 each carry an N-linked (GlcNAc...) asparagine glycan.

It belongs to the peptidase S8 family.

Its subcellular location is the secreted. Secreted subtilisin-like serine protease with keratinolytic activity that contributes to pathogenicity. In Arthroderma gypseum (strain ATCC MYA-4604 / CBS 118893) (Microsporum gypseum), this protein is Subtilisin-like protease 12 (SUB12).